The following is a 146-amino-acid chain: Large ribosomal subunit protein uL15 (146 aa).

A disordered region spans residues 1-57 (MKLFELQPAPGSKKLPKRKGRGHGTGNGKTAGRGHKGQNARSGGGVRPGFEGGQMPL). Positions 42 to 52 (SGGGVRPGFEG) are enriched in gly residues.

The protein belongs to the universal ribosomal protein uL15 family. Part of the 50S ribosomal subunit.

Functionally, binds to the 23S rRNA. In Acetivibrio thermocellus (strain ATCC 27405 / DSM 1237 / JCM 9322 / NBRC 103400 / NCIMB 10682 / NRRL B-4536 / VPI 7372) (Clostridium thermocellum), this protein is Large ribosomal subunit protein uL15.